The primary structure comprises 142 residues: MATSIGVSFSVGDGVPEAEKNAGEPENTYILRPVFQQRFRPSVVKDCIHAVLKEELANAEYSPEEMPQLTKHLSENIKDKLKEMGFDRYKMVVQVVIGEQRGEGVFMASRCFWDADTDNYTHDVFMNDSLFCVVAAFGCFYY.

The protein belongs to the dynein light chain Tctex-type family. Light chain of the cytoplasmic dynein complex 2, a multisubunit complex composed at least of eleven different proteins. The cytoplasmic dynein 2 complex consists of two catalytic heavy chains (HCs) and a number of non-catalytic subunits presented by intermediate chains (ICs), light intermediate chains (LICs) and light chains (LCs). Among them, a heavy chain (DYNC2H1), two intermediate chains (DYNC2I2 and DYNC2I1), a light intermediate chain (DYNC2LI1), and a light chain (DYNLT2B) are unique to the dynein-2 complex, but a subset of the light chains are also shared by dynein-1 and dynein-2 complexes. Interacts with DYNC2I1. The dimer DYNLT2B-DYNLT1/DYNLT3 interacts with DYNC2I1; this interaction is crucial for retrograde trafficking of ciliary proteins.

It localises to the dynein axonemal particle. Acts as one of several non-catalytic accessory components of the cytoplasmic dynein 2 complex (dynein-2 complex), a motor protein complex that drives the movement of cargos along microtubules within cilia and flagella in concert with the intraflagellar transport (IFT) system. Required for proper retrograde ciliary transport. This Homo sapiens (Human) protein is Dynein light chain Tctex-type protein 2B.